We begin with the raw amino-acid sequence, 360 residues long: Phospho-N-acetylmuramoyl-pentapeptide-transferase (360 aa).

Helical transmembrane passes span 27 to 47, 71 to 91, 93 to 113, 128 to 148, 168 to 188, 199 to 219, 239 to 259, 262 to 282, 288 to 308, and 337 to 357; these read GAMI…INSL, TPTM…LLWA, LASV…AIGF, FSGK…AFTI, LVIN…VGAG, GLAI…AYLS, LAVV…FNAP, AIFM…TVAV, IVLA…IIQV, and QVVI…LSTL.

The protein belongs to the glycosyltransferase 4 family. MraY subfamily. Mg(2+) is required as a cofactor.

The protein localises to the cell inner membrane. The catalysed reaction is UDP-N-acetyl-alpha-D-muramoyl-L-alanyl-gamma-D-glutamyl-meso-2,6-diaminopimeloyl-D-alanyl-D-alanine + di-trans,octa-cis-undecaprenyl phosphate = di-trans,octa-cis-undecaprenyl diphospho-N-acetyl-alpha-D-muramoyl-L-alanyl-D-glutamyl-meso-2,6-diaminopimeloyl-D-alanyl-D-alanine + UMP. The protein operates within cell wall biogenesis; peptidoglycan biosynthesis. Catalyzes the initial step of the lipid cycle reactions in the biosynthesis of the cell wall peptidoglycan: transfers peptidoglycan precursor phospho-MurNAc-pentapeptide from UDP-MurNAc-pentapeptide onto the lipid carrier undecaprenyl phosphate, yielding undecaprenyl-pyrophosphoryl-MurNAc-pentapeptide, known as lipid I. The chain is Phospho-N-acetylmuramoyl-pentapeptide-transferase from Brucella ovis (strain ATCC 25840 / 63/290 / NCTC 10512).